We begin with the raw amino-acid sequence, 96 residues long: Protein transport protein Sec61 subunit beta (96 aa).

A compositionally biased stretch (polar residues) spans 1 to 17 (MPGPTPSGTNVGSSGRS). Residues 1–54 (MPGPTPSGTNVGSSGRSPSKAVAARAAGSTVRQRKNASCGTRSAGRTTSAGTGG) are disordered. P2 is subject to N-acetylproline. The Cytoplasmic portion of the chain corresponds to 2-70 (PGPTPSGTNV…EDSPGLKVGP (69 aa)). A Phosphoserine modification is found at S7. T9 is subject to Phosphothreonine. 3 positions are modified to phosphoserine: S13, S14, and S17. A lipid anchor (S-palmitoyl cysteine) is attached at C39. Positions 40–50 (GTRSAGRTTSA) are enriched in low complexity. The helical transmembrane segment at 71 to 91 (VPVLVMSLLFIAAVFMLHIWG) threads the bilayer.

It belongs to the SEC61-beta family. In terms of assembly, the SEC61 channel-forming translocon complex consists of channel-forming core components SEC61A1, SEC61B and SEC61G and different auxiliary components such as SEC62 and SEC63. The SEC61 channel associates with the multi-pass translocon (MPT) complex. Interacts with TRAM1.

It is found in the endoplasmic reticulum membrane. Component of SEC61 channel-forming translocon complex that mediates transport of signal peptide-containing precursor polypeptides across the endoplasmic reticulum (ER). Forms a ribosome receptor and a gated pore in the ER membrane, both functions required for cotranslational translocation of nascent polypeptides. The SEC61 channel is also involved in ER membrane insertion of transmembrane proteins: it mediates membrane insertion of the first few transmembrane segments of proteins, while insertion of subsequent transmembrane regions of multi-pass membrane proteins is mediated by the multi-pass translocon (MPT) complex. The SEC61 channel cooperates with the translocating protein TRAM1 to import nascent proteins into the ER. Required for PKD1/Polycystin-1 biogenesis. The sequence is that of Protein transport protein Sec61 subunit beta from Mus musculus (Mouse).